Consider the following 104-residue polypeptide: SOSS complex subunit C (104 aa).

It belongs to the SOSS-C family. As to quaternary structure, belongs to the multiprotein complex Integrator. Component of the SOSS complex, composed of SOSS-B (SOSS-B1/NABP2 or SOSS-B2/NABP1), SOSS-A/INTS3 and SOSS-C/INIP.

The protein localises to the nucleus. Its function is as follows. Component of the SOSS complex, a multiprotein complex that functions downstream of the MRN complex to promote DNA repair and G2/M checkpoint. The SOSS complex associates with single-stranded DNA at DNA lesions and influences diverse endpoints in the cellular DNA damage response including cell-cycle checkpoint activation, recombinational repair and maintenance of genomic stability. Required for efficient homologous recombination-dependent repair of double-strand breaks (DSBs). This Taeniopygia guttata (Zebra finch) protein is SOSS complex subunit C (INIP).